Here is a 145-residue protein sequence, read N- to C-terminus: Prefoldin subunit alpha (145 aa).

The protein belongs to the prefoldin alpha subunit family. Heterohexamer of two alpha and four beta subunits.

It localises to the cytoplasm. Its function is as follows. Molecular chaperone capable of stabilizing a range of proteins. Seems to fulfill an ATP-independent, HSP70-like function in archaeal de novo protein folding. This Nitrosopumilus maritimus (strain SCM1) protein is Prefoldin subunit alpha.